A 534-amino-acid polypeptide reads, in one-letter code: Glucans biosynthesis protein D (534 aa).

A signal peptide (tat-type signal) is located at residues 1-26 (MQRRDFIRNASLALAAFGLPSLPACA).

It belongs to the OpgD/OpgG family. Predicted to be exported by the Tat system. The position of the signal peptide cleavage has not been experimentally proven.

It localises to the periplasm. The protein operates within glycan metabolism; osmoregulated periplasmic glucan (OPG) biosynthesis. Functionally, probably involved in the control of the structural glucose backbone of osmoregulated periplasmic glucans (OPGs). This is Glucans biosynthesis protein D from Stenotrophomonas maltophilia (strain K279a).